We begin with the raw amino-acid sequence, 367 residues long: Phospho-N-acetylmuramoyl-pentapeptide-transferase (367 aa).

The next 10 helical transmembrane spans lie at 16–36 (LLLA…WVHF), 62–82 (TMGG…FNLV), 87–107 (MLLP…DDWL), 125–145 (FWIM…PQPY), 158–178 (VGEV…IVFI), 190–210 (SLAG…TFLA), 214–234 (LTNL…FLWY), 240–260 (QVFM…VVAL), 264–284 (QWIL…STLI), and 326–346 (FVLI…IFGS).

Belongs to the glycosyltransferase 4 family. MraY subfamily. It depends on Mg(2+) as a cofactor.

The protein resides in the cell membrane. The catalysed reaction is UDP-N-acetyl-alpha-D-muramoyl-L-alanyl-gamma-D-glutamyl-meso-2,6-diaminopimeloyl-D-alanyl-D-alanine + di-trans,octa-cis-undecaprenyl phosphate = di-trans,octa-cis-undecaprenyl diphospho-N-acetyl-alpha-D-muramoyl-L-alanyl-D-glutamyl-meso-2,6-diaminopimeloyl-D-alanyl-D-alanine + UMP. Its pathway is cell wall biogenesis; peptidoglycan biosynthesis. In terms of biological role, catalyzes the initial step of the lipid cycle reactions in the biosynthesis of the cell wall peptidoglycan: transfers peptidoglycan precursor phospho-MurNAc-pentapeptide from UDP-MurNAc-pentapeptide onto the lipid carrier undecaprenyl phosphate, yielding undecaprenyl-pyrophosphoryl-MurNAc-pentapeptide, known as lipid I. The chain is Phospho-N-acetylmuramoyl-pentapeptide-transferase from Chloroflexus aggregans (strain MD-66 / DSM 9485).